Here is a 149-residue protein sequence, read N- to C-terminus: Oligosaccharyltransferase complex subunit OSTC (149 aa).

Residues 1 to 32 lie on the Cytoplasmic side of the membrane; it reads METLFRLPFAVLECPNIKLKRPGWVHMPSAMT. The helical transmembrane segment at 33–53 threads the bilayer; it reads VYALVVVSYFLITGGIIYDVI. Topologically, residues 54 to 83 are extracellular; sequence VEPPSVGSMTDEHGHQRPVAFLAYRVNGQY. A helical transmembrane segment spans residues 84–104; the sequence is IMEGLASSFLFTMGGLGFIIL. The Cytoplasmic segment spans residues 105-117; sequence DRSNAPNIPKLNR. A helical transmembrane segment spans residues 118–138; it reads FLLLFIGFVSVLLSFFMARVF. Over 139–149 the chain is Extracellular; that stretch reads MRMKLPGYLMG.

Belongs to the OSTC family. In terms of assembly, specific component of the STT3A-containing form of the oligosaccharyltransferase (OST) complex.

Its subcellular location is the membrane. Its pathway is protein modification; protein glycosylation. In terms of biological role, specific component of the STT3A-containing form of the oligosaccharyl transferase (OST) complex that catalyzes the initial transfer of a defined glycan (Glc(3)Man(9)GlcNAc(2) in eukaryotes) from the lipid carrier dolichol-pyrophosphate to an asparagine residue within an Asn-X-Ser/Thr consensus motif in nascent polypeptide chains, the first step in protein N-glycosylation. N-glycosylation occurs cotranslationally and the complex associates with the Sec61 complex at the channel-forming translocon complex that mediates protein translocation across the endoplasmic reticulum (ER). All subunits are required for a maximal enzyme activity. The sequence is that of Oligosaccharyltransferase complex subunit OSTC from Gallus gallus (Chicken).